The sequence spans 546 residues: MSKDPGRILIFDTTLRDGEQSPGASLNLEEKLAIAHQLARLGVDVIEAGFPFASPGDFKAVNKISEVVGGENGPIICGLARASTSDIKACYEAIIPAPKKRIHTFIATSDIHLKHKLRKSRKDVLSIVPEMVSYAKSLVDDIEFSCEDASRSDPEFLYEVIQLAITSGATTINIPDTVGFTTPSEFGKLIFDINKNVPNIDEAVISVHGHNDLGLAVANFLEAAKNGARQLECTINGIGERAGNASLEELVMALHVRKSFFNSFFGRSSDSPTPLTAIRTEEITKTSRLVSNLTGMNVQPNKAIVGANAFAHESGIHQDGVLKNRLTYEIIDAKTVGLNDNKISLGKLSGRSAVRARLEEMGYDLSREDLNDAFARFKDLADRKREITDRDLEAIVSEQVQLPESRFQLSHVQVSCGSTSKPTATVTILNTETHTEDTSVAIGTGPVDAVCEAINELAKVPNELIEFSVKSVTEGIDALGEVTIRIRNKNKIYSGHSADTDVVVAAANAFLNALNRLIFSEKKECIHPQFDNLENSEKKVFSNPKN.

The region spanning 8–271 (ILIFDTTLRD…NSFFGRSSDS (264 aa)) is the Pyruvate carboxyltransferase domain. Residues D17, H208, H210, and N244 each contribute to the Mn(2+) site. The tract at residues 408–546 (QLSHVQVSCG…EKKVFSNPKN (139 aa)) is regulatory domain.

Belongs to the alpha-IPM synthase/homocitrate synthase family. LeuA type 1 subfamily. In terms of assembly, homodimer. Mn(2+) is required as a cofactor.

It is found in the cytoplasm. It carries out the reaction 3-methyl-2-oxobutanoate + acetyl-CoA + H2O = (2S)-2-isopropylmalate + CoA + H(+). Its pathway is amino-acid biosynthesis; L-leucine biosynthesis; L-leucine from 3-methyl-2-oxobutanoate: step 1/4. Its function is as follows. Catalyzes the condensation of the acetyl group of acetyl-CoA with 3-methyl-2-oxobutanoate (2-ketoisovalerate) to form 3-carboxy-3-hydroxy-4-methylpentanoate (2-isopropylmalate). The protein is 2-isopropylmalate synthase of Prochlorococcus marinus (strain MIT 9515).